A 296-amino-acid polypeptide reads, in one-letter code: tRNA dimethylallyltransferase (296 aa).

11 to 18 provides a ligand contact to ATP; it reads GPTAVGKT. Position 13–18 (13–18) interacts with substrate; that stretch reads TAVGKT. An interaction with substrate tRNA region spans residues 36 to 39; it reads DSQQ.

This sequence belongs to the IPP transferase family. Monomer. It depends on Mg(2+) as a cofactor.

The enzyme catalyses adenosine(37) in tRNA + dimethylallyl diphosphate = N(6)-dimethylallyladenosine(37) in tRNA + diphosphate. Catalyzes the transfer of a dimethylallyl group onto the adenine at position 37 in tRNAs that read codons beginning with uridine, leading to the formation of N6-(dimethylallyl)adenosine (i(6)A). This chain is tRNA dimethylallyltransferase, found in Streptococcus agalactiae serotype III (strain NEM316).